Here is a 72-residue protein sequence, read N- to C-terminus: UPF0346 protein EF_1680 (72 aa).

Belongs to the UPF0346 family.

The sequence is that of UPF0346 protein EF_1680 from Enterococcus faecalis (strain ATCC 700802 / V583).